The primary structure comprises 429 residues: 3-phosphoshikimate 1-carboxyvinyltransferase (429 aa).

The 3-phosphoshikimate site is built by lysine 23, serine 24, and arginine 28. Phosphoenolpyruvate is bound at residue lysine 23. Positions 95 and 123 each coordinate phosphoenolpyruvate. Positions 168, 170, 316, and 343 each coordinate 3-phosphoshikimate. Glutamine 170 contributes to the phosphoenolpyruvate binding site. Aspartate 316 serves as the catalytic Proton acceptor. Phosphoenolpyruvate-binding residues include arginine 347 and arginine 389.

It belongs to the EPSP synthase family. In terms of assembly, monomer.

It localises to the cytoplasm. The catalysed reaction is 3-phosphoshikimate + phosphoenolpyruvate = 5-O-(1-carboxyvinyl)-3-phosphoshikimate + phosphate. It functions in the pathway metabolic intermediate biosynthesis; chorismate biosynthesis; chorismate from D-erythrose 4-phosphate and phosphoenolpyruvate: step 6/7. Catalyzes the transfer of the enolpyruvyl moiety of phosphoenolpyruvate (PEP) to the 5-hydroxyl of shikimate-3-phosphate (S3P) to produce enolpyruvyl shikimate-3-phosphate and inorganic phosphate. This chain is 3-phosphoshikimate 1-carboxyvinyltransferase, found in Bacillus cereus (strain ZK / E33L).